An 89-amino-acid chain; its full sequence is Small ribosomal subunit protein uS15 (89 aa).

Belongs to the universal ribosomal protein uS15 family. In terms of assembly, part of the 30S ribosomal subunit. Forms a bridge to the 50S subunit in the 70S ribosome, contacting the 23S rRNA.

Functionally, one of the primary rRNA binding proteins, it binds directly to 16S rRNA where it helps nucleate assembly of the platform of the 30S subunit by binding and bridging several RNA helices of the 16S rRNA. Its function is as follows. Forms an intersubunit bridge (bridge B4) with the 23S rRNA of the 50S subunit in the ribosome. The protein is Small ribosomal subunit protein uS15 of Serratia proteamaculans (strain 568).